Here is a 1648-residue protein sequence, read N- to C-terminus: Homeostatic regulator of DAG (1648 aa).

The region spanning 5 to 101 is the DMAP1-binding domain; that stretch reads IPPTLPLDLQ…YRVTTINSTS (97 aa). N-linked (GlcNAc...) asparagine glycans are attached at residues asparagine 28, asparagine 71, and asparagine 98. Disordered regions lie at residues 52–73 and 96–130; these read PYTP…RNTS and TINS…ENGS. Residues 60–71 are compositionally biased toward basic residues; sequence NSRKSKHLHRRN. Polar residues-rich tracts occupy residues 96–105 and 113–128; these read TINSTSANNT and YTAS…SDEN. At serine 99 the chain carries Phosphoserine. 3 N-linked (GlcNAc...) asparagine glycosylation sites follow: asparagine 128, asparagine 151, and asparagine 209. Positions 158–893 are fatty acyl-AMP ligase-like domain 1; sequence AMTDSLPLIL…VEKKFLNNDL (736 aa). A helical transmembrane segment spans residues 228–248; that stretch reads VIEFTIALLGCFISGMAAVPV. N-linked (GlcNAc...) asparagine glycans are attached at residues asparagine 288, asparagine 328, asparagine 575, asparagine 644, and asparagine 730. Serine 751 is subject to Phosphoserine. Residues asparagine 881, asparagine 917, asparagine 995, and asparagine 1009 are each glycosylated (N-linked (GlcNAc...) asparagine). A fatty acyl-AMP ligase-like domain 2 region spans residues 950–1648; it reads VKPKLALQCS…LLSDYEKDNI (699 aa). A helical transmembrane segment spans residues 1061-1081; sequence YVAMIMACLYCNLLVIPLPSV. Residue asparagine 1198 is glycosylated (N-linked (GlcNAc...) asparagine). The helical transmembrane segment at 1224–1244 threads the bilayer; that stretch reads GLGFMFSCLLGIYTGASTCLF. 8 N-linked (GlcNAc...) asparagine glycosylation sites follow: asparagine 1301, asparagine 1302, asparagine 1447, asparagine 1472, asparagine 1488, asparagine 1565, asparagine 1597, and asparagine 1634.

It localises to the vacuole membrane. The protein resides in the mitochondrion membrane. Functionally, homeostatic regulator of a chemically distinct subset of diacylglycerols (DAGs) with C36 chain length that prevents the toxic accumulation of these specific DAGs in the logarithmic growth phase, which otherwise leads to endoplasmic reticulum stress. Maintains the basal level of DAG subspecies by directly facilitating DAG to triacylglycerol (TAG) conversion process, possibly via adenylation activity of its FLD domains. Does not affect the abundant DAG species (representing over 90% of total DAG pool), comprised of C32 and C34 chain lengths. Required for vacuole fusion-mediated osmoadaptation. The chain is Homeostatic regulator of DAG from Saccharomyces cerevisiae (strain ATCC 204508 / S288c) (Baker's yeast).